Reading from the N-terminus, the 174-residue chain is Gamma-crystallin A (174 aa).

2 consecutive Beta/gamma crystallin 'Greek key' domains span residues 2-40 and 41-83; these read GKITFYEDRGFQGRCYECSSDCPNLQTYFSRCNSIRVDS and GCWM…RSIP. Residues 84 to 87 are connecting peptide; sequence YTSS. 2 Beta/gamma crystallin 'Greek key' domains span residues 88–128 and 129–171; these read HRIR…HVLE and GSWV…RRVM.

It belongs to the beta/gamma-crystallin family.

Functionally, crystallins are the dominant structural components of the vertebrate eye lens. In Rattus norvegicus (Rat), this protein is Gamma-crystallin A (Cryga).